A 462-amino-acid polypeptide reads, in one-letter code: Acetate--CoA ligase [ADP-forming] I subunit alpha (462 aa).

It belongs to the acetate CoA ligase alpha subunit family. As to quaternary structure, heterotetramer of two alpha and two beta subunits.

The protein resides in the cytoplasm. It carries out the reaction acetate + ATP + CoA = acetyl-CoA + ADP + phosphate. Activity is dependent on magnesium. In terms of biological role, catalyzes the reversible formation of acetate and ATP from acetyl-CoA by using ADP and phosphate. Can use other substrates such as isobutyryl-CoA, propionyl-CoA and butyryl-CoA, but not indoleacetyl-CoA, phenylacetyl-CoA or succinyl-CoA. Seems to be involved primarily in the conversion of acetyl-CoA to acetate. Participates in the degradation of branched-chain amino acids via branched-chain-acyl-CoA esters. This Pyrococcus furiosus (strain ATCC 43587 / DSM 3638 / JCM 8422 / Vc1) protein is Acetate--CoA ligase [ADP-forming] I subunit alpha.